Reading from the N-terminus, the 1696-residue chain is E3 ubiquitin-protein ligase listerin (1696 aa).

17 HEAT repeats span residues 17–55 (RGVLPYWPRIYCKISLDLDRRVREATQQAFEQLILKVKK), 102–140 (FCKEEIMNVLLDHLLKETPDTLSDTQAVPIEDRESKYFR), 144–181 (CSLLALKRLLCMLPRSENSSLQERLAHLLSQSKFWKYS), 209–250 (AEAS…CWEH), 252–289 (NAQKGVLPKLWSVLREGGRGLATVIFPNLLPFISRVPT), 354–394 (LISD…KAES), 431–468 (EKNLAGVSGLLQVLQNPNCLLKVNKKKKAKIRFKGEGD), 542–580 (FPSIRVFQVLLQQSSEEDPKNLNSPDHDVTPRHKNPAVQ), 596–634 (EESDFLVDILYSVLFCCTDSSERKHLLDDMTKMNFKWSV), 921–958 (LCTASLLSKMALRLLEKEKSLKEEEIGVKINITVAEML), 992–1029 (MDLSVHLPGLLELLYNRSKEDGSLWSLTANRFIHKRGA), 1108–1148 (DLCQ…LIGL), 1150–1188 (VEMIRFLSILLKYLASSVSSLVDVDWDFIMCSMLAWLES), 1245–1282 (GIYSLMLPMLVRIAEEYKASETSHMSHVLKSLGRTLGY), 1307–1344 (DSLQSLLNTLAPLLLYRERSVQITVYHLLDKIMADLPG), 1371–1405 (VLAIQEDLVESILKEIPVGEFAVIEPLKEEFCFVL), and 1406–1442 (GYLLTWKLILTFFKAASSQLRALYSQYLRKTKSLNKL). The segment at 1645-1692 (CMICFSVIHGSNYSLPKKACRTCKKKFHSECLYKWFTSSNKSTCPLCR) adopts an RING-type zinc-finger fold.

Belongs to the LTN1 family. As to quaternary structure, component of the ribosome quality control complex (RQC), composed of at least the E3 ubiquitin ligase LTN1 and NEMF associated with the 60S ribosomal subunit. The complex probably also contains TCF25 as well as VCP/p97 and its ubiquitin-binding cofactors.

It localises to the cytoplasm. The protein resides in the cytosol. The enzyme catalyses S-ubiquitinyl-[E2 ubiquitin-conjugating enzyme]-L-cysteine + [acceptor protein]-L-lysine = [E2 ubiquitin-conjugating enzyme]-L-cysteine + N(6)-ubiquitinyl-[acceptor protein]-L-lysine.. It functions in the pathway protein modification; protein ubiquitination. Its function is as follows. E3 ubiquitin-protein ligase component of the ribosome quality control complex (RQC), a ribosome-associated complex that mediates ubiquitination and extraction of incompletely synthesized nascent chains for proteasomal degradation. Within the RQC complex, LTN1 is recruited to stalled 60S ribosomal subunits by NEMF and mediates ubiquitination of stalled nascent chains. Ubiquitination leads to VCP/p97 recruitment for extraction and degradation of the incomplete translation product. The chain is E3 ubiquitin-protein ligase listerin (ltn1) from Xenopus tropicalis (Western clawed frog).